A 29-amino-acid chain; its full sequence is KYCYNDDDCKSECMVVKYCQQGTCYCKGN.

In terms of processing, contains 3 disulfide bonds. In terms of tissue distribution, expressed by the venom gland.

The protein resides in the secreted. May act as a toxin. This chain is Orphan peptide CllNtx, found in Centruroides limpidus (Mexican scorpion).